Consider the following 192-residue polypeptide: Ferritin-like protein (192 aa).

H44, E48, and H102 together coordinate Fe(3+). A linker region spans residues 143–179 (RFDHDYADPHAHHDEHRDHLADMPSAGSSHEEVQPVA). Over residues 149-163 (ADPHAHHDEHRDHLA) the composition is skewed to basic and acidic residues. The segment at 149 to 192 (ADPHAHHDEHRDHLADMPSAGSSHEEVQPVAHKKKGFTVGSLIQ) is disordered. The targeting peptide stretch occupies residues 180–192 (HKKKGFTVGSLIQ).

In terms of assembly, homodimer, with 2 Fe atoms bound at the subunit interface (without encapsulin), probably also a dimer when encapsulated. 42 electron-dense accretions can be seen inside the nanocompartment which are probably this cargo protein, although perhaps up to one cargo dimer can be bound per shell protein.

Its subcellular location is the encapsulin nanocompartment. It carries out the reaction 4 Fe(2+) + O2 + 4 H(+) = 4 Fe(3+) + 2 H2O. Its function is as follows. Cargo protein of a type 1 encapsulin nanocompartment. A ferritin-like iron-binding protein probably involved in iron mineralization in the encapsulin nanocompartment. Has ferroxidase activity even when encapsulated, the rate is probably controlled by the rate of Fe flux across the nanocompartment pores. Part of the iron-mineralizing encapsulin-associated Firmicute (IMEF) system. 2 different cargo proteins have been identified (IMEF and Fer); when both are expressed in E.coli with the shell protein only IMEF is detected within the nanocompartment. E.coli expressing all 3 genes stores the largest amount of iron and is protected from Fe/H2O2-induced oxidative stress. The sequence is that of Ferritin-like protein from Bacillus thermotolerans (Quasibacillus thermotolerans).